Reading from the N-terminus, the 1035-residue chain is Enteropeptidase (1035 aa).

The N-myristoyl glycine moiety is linked to residue Gly2. Residues 2-18 (GSKRSVPSRHRSLTTYE) are Cytoplasmic-facing. The chain crosses the membrane as a helical; Signal-anchor for type II membrane protein span at residues 19–47 (VMFAVLFVILVALCAGLIAVSWLSIQGSV). Over 48-1035 (KDAAFGKSHE…FTEWIQSFLH (988 aa)) the chain is Extracellular. In terms of domain architecture, SEA spans 54–169 (KSHEARGTLK…NSIDITASLE (116 aa)). Residues Asn116, Asn147, Asn170, and Asn194 are each glycosylated (N-linked (GlcNAc...) asparagine). The region spanning 197 to 238 (IECPPDSRLCADALKCIAIDLFCDGELNCPDGSDEDNKTCAT) is the LDL-receptor class A 1 domain. 4 disulfides stabilise this stretch: Cys199–Cys212, Cys206–Cys225, Cys219–Cys236, and Cys240–Cys269. N-linked (GlcNAc...) asparagine glycosylation is found at Asn233, Asn263, Asn264, Asn404, Asn456, Asn486, Asn519, Asn550, and Asn646. The 111-residue stretch at 240–350 (CDGRFLLTGS…IGFKVTYTAF (111 aa)) folds into the CUB 1 domain. The 163-residue stretch at 358-520 (YEKINCNFED…ISLTYGICNV (163 aa)) folds into the MAM domain. Residues Cys540 and Cys568 are joined by a disulfide bond. The CUB 2 domain occupies 540 to 650 (CGGPHDLWEP…QGFKANFTTG (111 aa)). The region spanning 657 to 695 (EPCKEDNFQCKDGECIPLVNLCDGFPHCKDGSDEAHCVR) is the LDL-receptor class A 2 domain. 3 disulfide bridges follow: Cys659–Cys671, Cys666–Cys684, and Cys678–Cys693. Residues 694–787 (VRLFNGTTDS…LILLQCNYKS (94 aa)) enclose the SRCR domain. N-linked (GlcNAc...) asparagine glycans are attached at residues Asn698, Asn722, Asn741, and Asn762. 6 disulfide bridges follow: Cys773/Cys783, Cys788/Cys912, Cys826/Cys842, Cys926/Cys993, Cys957/Cys972, and Cys983/Cys1011. The Peptidase S1 domain maps to 801–1035 (IVGGSDSREG…FTEWIQSFLH (235 aa)). His841 acts as the Charge relay system in catalysis. Asn864 carries an N-linked (GlcNAc...) asparagine glycan. Asp892 functions as the Charge relay system in the catalytic mechanism. N-linked (GlcNAc...) asparagine glycans are attached at residues Asn903 and Asn965. The active-site Charge relay system is Ser987.

Belongs to the peptidase S1 family. As to quaternary structure, heterodimer of a catalytic (light) chain and a multidomain (heavy) chain linked by a disulfide bond. Post-translationally, the chains are derived from a single precursor that is cleaved by a trypsin-like protease. In terms of tissue distribution, intestinal brush border.

The protein resides in the membrane. It catalyses the reaction Activation of trypsinogen by selective cleavage of 6-Lys-|-Ile-7 bond.. Its function is as follows. Responsible for initiating activation of pancreatic proteolytic proenzymes (trypsin, chymotrypsin and carboxypeptidase A). It catalyzes the conversion of trypsinogen to trypsin which in turn activates other proenzymes including chymotrypsinogen, procarboxypeptidases, and proelastases. The protein is Enteropeptidase (TMPRSS15) of Bos taurus (Bovine).